Reading from the N-terminus, the 257-residue chain is 3-deoxy-manno-octulosonate cytidylyltransferase (257 aa).

Belongs to the KdsB family.

The protein localises to the cytoplasm. The enzyme catalyses 3-deoxy-alpha-D-manno-oct-2-ulosonate + CTP = CMP-3-deoxy-beta-D-manno-octulosonate + diphosphate. It functions in the pathway nucleotide-sugar biosynthesis; CMP-3-deoxy-D-manno-octulosonate biosynthesis; CMP-3-deoxy-D-manno-octulosonate from 3-deoxy-D-manno-octulosonate and CTP: step 1/1. Its pathway is bacterial outer membrane biogenesis; lipopolysaccharide biosynthesis. Functionally, activates KDO (a required 8-carbon sugar) for incorporation into bacterial lipopolysaccharide in Gram-negative bacteria. The chain is 3-deoxy-manno-octulosonate cytidylyltransferase from Methylococcus capsulatus (strain ATCC 33009 / NCIMB 11132 / Bath).